The following is a 95-amino-acid chain: Small ribosomal subunit protein bS6 (95 aa).

The protein belongs to the bacterial ribosomal protein bS6 family.

Its function is as follows. Binds together with bS18 to 16S ribosomal RNA. In Bacillus velezensis (strain DSM 23117 / BGSC 10A6 / LMG 26770 / FZB42) (Bacillus amyloliquefaciens subsp. plantarum), this protein is Small ribosomal subunit protein bS6.